Consider the following 251-residue polypeptide: Probable transcriptional regulatory protein BLD_0450 (251 aa).

The protein belongs to the TACO1 family.

The protein resides in the cytoplasm. This is Probable transcriptional regulatory protein BLD_0450 from Bifidobacterium longum (strain DJO10A).